The following is a 338-amino-acid chain: Tryptophan--tRNA ligase (338 aa).

ATP-binding positions include Gln-11 to Ser-13 and Gly-19 to Asn-20. A 'HIGH' region motif is present at residues Pro-12–Asn-20. Asp-135 contacts L-tryptophan. Residues Gly-147 to Asp-149, Val-189, and Lys-198 to Ser-202 each bind ATP. Residues Lys-198–Ser-202 carry the 'KMSKS' region motif.

The protein belongs to the class-I aminoacyl-tRNA synthetase family. In terms of assembly, homodimer.

It is found in the cytoplasm. It catalyses the reaction tRNA(Trp) + L-tryptophan + ATP = L-tryptophyl-tRNA(Trp) + AMP + diphosphate + H(+). In terms of biological role, catalyzes the attachment of tryptophan to tRNA(Trp). In Vibrio cholerae serotype O1 (strain ATCC 39315 / El Tor Inaba N16961), this protein is Tryptophan--tRNA ligase.